The primary structure comprises 4265 residues: Dynein axonemal heavy chain 1 (4265 aa).

The segment at 1 to 88 is disordered; that stretch reads MEQPNSKGYS…KSPLTGTDKK (88 aa). Residues 1–1542 form a stem region; sequence MEQPNSKGYS…YIRAVNAEFI (1542 aa). The segment covering 60 to 69 has biased composition (pro residues); sequence PHLPLPPAPP. AAA stretches follow at residues 1543 to 1764, 1824 to 2057, 2189 to 2449, and 2547 to 2799; these read YGYE…VISA, EAIR…SSVK, TMVP…VFQG, and DYNQ…LTRH. Residues 1581–1588 carry the GPAGTGKT motif motif; it reads GPAGTGKT. 1581–1588 is a binding site for ATP; it reads GPAGTGKT. The CFDEFNR motif motif lies at 1631-1637; the sequence is CFDEFNR. ATP contacts are provided by residues 1862–1869, 2227–2234, and 2586–2593; these read GPTGSGKS, GPTGTGKT, and GVGGSGRS. Positions 2814–3112 are stalk; the sequence is FSILIGQKKL…EELELKCEQC (299 aa). Positions 3074 to 3122 form a coiled coil; the sequence is LDEAKQRLREVEDGIATMQAKYRECITKKEELELKCEQCEQRLGRAGKL. 2 AAA regions span residues 3197–3427 and 3640–3859; these read LGNP…EIQA and MQDF…QLKM.

It belongs to the dynein heavy chain family. As to quaternary structure, consists of at least two heavy chains and a number of intermediate and light chains. Expressed primarily in trachea and testis, 2 tissues containing axonemal structures. Also expressed in brain.

The protein localises to the cytoplasm. It is found in the cytoskeleton. Its subcellular location is the cilium axoneme. The protein resides in the cell projection. It localises to the cilium. The protein localises to the flagellum. Force generating protein of cilia required for sperm flagellum motility. Produces force towards the minus ends of microtubules. Dynein has ATPase activity; the force-producing power stroke is thought to occur on release of ADP. Required in spermatozoa for the formation of the inner dynein arms and biogenesis of the axoneme. In Homo sapiens (Human), this protein is Dynein axonemal heavy chain 1.